An 82-amino-acid chain; its full sequence is Exodeoxyribonuclease 7 small subunit (82 aa).

Belongs to the XseB family. In terms of assembly, heterooligomer composed of large and small subunits.

It is found in the cytoplasm. It carries out the reaction Exonucleolytic cleavage in either 5'- to 3'- or 3'- to 5'-direction to yield nucleoside 5'-phosphates.. Functionally, bidirectionally degrades single-stranded DNA into large acid-insoluble oligonucleotides, which are then degraded further into small acid-soluble oligonucleotides. The chain is Exodeoxyribonuclease 7 small subunit from Coxiella burnetii (strain CbuG_Q212) (Coxiella burnetii (strain Q212)).